We begin with the raw amino-acid sequence, 295 residues long: sn-glycerol-3-phosphate transport system permease protein UgpA (295 aa).

Topologically, residues 1-11 (MSSSRPVFRSR) are cytoplasmic. Residues 12–32 (WLPYLLVAPQLVITVIFFIWP) traverse the membrane as a helical segment. The Periplasmic portion of the chain corresponds to 33 to 80 (AGEALWYSLQSVDPFGFSSQFVGLENFVALFHDSYYLDAFWTTIKFSA). An ABC transmembrane type-1 domain is found at 76 to 284 (IKFSALVTFS…FLVIILTVVQ (209 aa)). The helical transmembrane segment at 81–101 (LVTFSGLLVSLFFAALVDYVV) threads the bilayer. The Cytoplasmic portion of the chain corresponds to 102 to 109 (RGSRFYQT). A helical membrane pass occupies residues 110–130 (LMLLPYAVAPAVAAVLWIFLF). The Periplasmic segment spans residues 131–157 (NPGRGLITHFLGEFGYDWNHAQNSGQA). Residues 158–178 (MFLVVFASVWKQISYNFLFFF) form a helical membrane-spanning segment. Topologically, residues 179–207 (AALQSIPRSLVEAAAIDGAGPIRRFFRLS) are cytoplasmic. A helical membrane pass occupies residues 208–228 (LPLIAPVSFFLLVVNLVYAFF). Over 229–262 (DTFPVIDAATAGGPVQATTTLIYKIYREGFTGLD) the chain is Periplasmic. The chain crosses the membrane as a helical span at residues 263-283 (LSASAAQSVVLMFLVIILTVV). The Cytoplasmic portion of the chain corresponds to 284–295 (QFRYVESKVRYQ).

It belongs to the binding-protein-dependent transport system permease family. UgpAE subfamily. As to quaternary structure, the complex is composed of two ATP-binding proteins (UgpC), two transmembrane proteins (UgpA and UgpE) and a solute-binding protein (UgpB).

It is found in the cell inner membrane. Part of the ABC transporter complex UgpBAEC involved in sn-glycerol-3-phosphate (G3P) import. Probably responsible for the translocation of the substrate across the membrane. The chain is sn-glycerol-3-phosphate transport system permease protein UgpA (ugpA) from Salmonella typhimurium (strain LT2 / SGSC1412 / ATCC 700720).